We begin with the raw amino-acid sequence, 515 residues long: Low affinity ammonium transporter (515 aa).

Over 1 to 78 the chain is Extracellular; sequence MSTSSSVTQK…IIGNSFGTTN (78 aa). A helical membrane pass occupies residues 79–99; the sequence is AGQLSWFASAYSLTVGTFILI. Residues 100–111 lie on the Cytoplasmic side of the membrane; it reads AGRLGDIFGHKK. Residues 112–132 form a helical membrane-spanning segment; that stretch reads FFVLGFFWYALWSLLAGFSVY. Residues 133–140 lie on the Extracellular side of the membrane; it reads SNQIFFDC. The helical transmembrane segment at 141–161 threads the bilayer; sequence CRAFQGMGPAFLLPNAIAILG. Residues 162–171 lie on the Cytoplasmic side of the membrane; that stretch reads RTYKPGRRKN. Residues 172–192 form a helical membrane-spanning segment; the sequence is MVFSLFGASAPGGFFLGAVFS. Residues 193–202 lie on the Extracellular side of the membrane; it reads SMLGQLAWWP. Residues 203-223 form a helical membrane-spanning segment; sequence WAYWIMGIACFVLAVAGYFVI. The Cytoplasmic segment spans residues 224 to 241; sequence PHTPMPSRDASSFKLLER. The helical transmembrane segment at 242 to 262 threads the bilayer; the sequence is IDFAGSVTGVVGLILFNFAWN. Topologically, residues 263–270 are extracellular; that stretch reads QGPVVGWQ. The chain crosses the membrane as a helical span at residues 271–291; the sequence is TPYTYALLIVGTFFLVIFAYI. The Cytoplasmic segment spans residues 292–310; that stretch reads ESRAAFPLLPFAALSSDTA. Residues 311 to 331 traverse the membrane as a helical segment; that stretch reads FVLSCIAAGWASFGIWIFYTW. Topologically, residues 332 to 346 are extracellular; that stretch reads QFMEDSRGQTPLLSS. A helical transmembrane segment spans residues 347–367; that stretch reads AQFSPVAISGFCAAVTTGFLL. The Cytoplasmic segment spans residues 368-374; sequence SHTPPST. Residues 375 to 395 traverse the membrane as a helical segment; that stretch reads VMLFAMTAFTVGTILIATAPV. At 396–403 the chain is on the extracellular side; that stretch reads HQTYWAQT. A helical transmembrane segment spans residues 404 to 424; it reads FVSIIVMPWGMDMSFPAATIM. Residues 425 to 435 lie on the Cytoplasmic side of the membrane; that stretch reads LSDSMPHEHQG. A helical membrane pass occupies residues 436-456; it reads LAASLVNTVVNYSISIGLGIA. Topologically, residues 457–479 are extracellular; that stretch reads GTIESRVNDGGAKPLKGYRCSWY. The chain crosses the membrane as a helical span at residues 480–500; sequence MGIGLSGLGIFVAATYAWSTF. The Cytoplasmic portion of the chain corresponds to 501–515; it reads MKSKKRISEKQHFIE.

This sequence belongs to the major facilitator superfamily.

The protein localises to the cell membrane. In terms of biological role, low affinity ammonium transporter of the plasma membrane. May be involved in drug resistance through pumping them out of the cell. The chain is Low affinity ammonium transporter from Saccharomyces cerevisiae (strain ATCC 204508 / S288c) (Baker's yeast).